We begin with the raw amino-acid sequence, 443 residues long: MTHIQLDYGKTLEFFGEHELQQQKDIVKSIHNTIHKGTGAGSDFLGWIDLPVDYDKEEFSRILEASKRVKDNSEVFVVIGIGGSYLGARAAIEMLTSSFRNSDEYPEIVFVGNHLSSTYTQELIDYLDGKDFSVNVISKSGTTTEPAVSFRLFKQLLENKYGKEEAKKRIFATTDKEKGALKQLATNEGYETFVVPDDIGGRYSVLTAVGLLPIAVAGIDIKAMMEGAAKAREELSSENLEDNIAYQYATIRNVLYAKGYDTEMLINYEPSMQYFNEWWKQLFGESEGKDYKGIYPSSANYTTDLHSLGQYVQEGRRFLFETVVKVNNPKHDITIEEDSDNLDGLNYLAGKTIDEVNTKAFEGTLLAHTDGGVPNIVLNIPRLDEETFGYVVYFFELACSMSGYQLGVNPFNQPGVEAYKQNMFALLGKQGFEDKKEALEKRL.

Glutamate 285 acts as the Proton donor in catalysis. Residues histidine 306 and lysine 420 contribute to the active site.

This sequence belongs to the GPI family.

The protein localises to the cytoplasm. The enzyme catalyses alpha-D-glucose 6-phosphate = beta-D-fructose 6-phosphate. The protein operates within carbohydrate biosynthesis; gluconeogenesis. It functions in the pathway carbohydrate degradation; glycolysis; D-glyceraldehyde 3-phosphate and glycerone phosphate from D-glucose: step 2/4. Its function is as follows. Catalyzes the reversible isomerization of glucose-6-phosphate to fructose-6-phosphate. The protein is Glucose-6-phosphate isomerase of Staphylococcus saprophyticus subsp. saprophyticus (strain ATCC 15305 / DSM 20229 / NCIMB 8711 / NCTC 7292 / S-41).